The sequence spans 218 residues: LexA repressor (218 aa).

Residues 28–48 (RAEIAAEFGFSSPNSAEEHLR) constitute a DNA-binding region (H-T-H motif). Catalysis depends on for autocatalytic cleavage activity residues Ser136 and Lys173.

Belongs to the peptidase S24 family. In terms of assembly, homodimer.

The enzyme catalyses Hydrolysis of Ala-|-Gly bond in repressor LexA.. Represses a number of genes involved in the response to DNA damage (SOS response), including recA and lexA. In the presence of single-stranded DNA, RecA interacts with LexA causing an autocatalytic cleavage which disrupts the DNA-binding part of LexA, leading to derepression of the SOS regulon and eventually DNA repair. This chain is LexA repressor, found in Cupriavidus metallidurans (strain ATCC 43123 / DSM 2839 / NBRC 102507 / CH34) (Ralstonia metallidurans).